We begin with the raw amino-acid sequence, 888 residues long: Molybdenum cofactor sulfurase (888 aa).

Phosphoserine is present on Ser34. The residue at position 264 (Lys264) is an N6-(pyridoxal phosphate)lysine. The active site involves Cys424. A phosphoserine mark is found at Ser528 and Ser530. The MOSC domain maps to 706–867 (KQSSNSQRNA…LSVGSQVLPV (162 aa)).

The protein belongs to the class-V pyridoxal-phosphate-dependent aminotransferase family. MOCOS subfamily. The cofactor is pyridoxal 5'-phosphate.

The enzyme catalyses Mo-molybdopterin + L-cysteine + AH2 = thio-Mo-molybdopterin + L-alanine + A + H2O. The protein operates within cofactor biosynthesis; molybdopterin biosynthesis. Its function is as follows. Sulfurates the molybdenum cofactor. Sulfation of molybdenum is essential for xanthine dehydrogenase (XDH) and aldehyde oxidase (ADO) enzymes in which molybdenum cofactor is liganded by 1 oxygen and 1 sulfur atom in active form. In vitro, the C-terminal domain is able to reduce N-hydroxylated prodrugs, such as benzamidoxime. The polypeptide is Molybdenum cofactor sulfurase (Homo sapiens (Human)).